A 260-amino-acid chain; its full sequence is MTQAQELSVDFDFRLDGKVALVTGAASGIGAAIASAYATKGARIAAVDLNAEGAEALAAQLGGDRGAHRGFACDVADAASVQAAADAVAAEFGRIDILVNSAGVARLAPAEELSLQDWDSTLAINLSGTFLMCQAVGKRMLEAGGGAIVNMASQAATVALDQHVAYCASKFGVVGVSKVLAAEWGGRGVRVNTISPTVVLTELGHKAWDGPRGDALKKLIPTGRFAYPDEIAAAAVFLASDAAAMINGADLVIDGGYTIK.

NAD(+) is bound at residue L21 to N50. Y166 acts as the Proton acceptor in catalysis. K170 contributes to the NAD(+) binding site.

The protein belongs to the short-chain dehydrogenases/reductases (SDR) family.

The enzyme catalyses D-threitol + NAD(+) = D-erythrulose + NADH + H(+). Its pathway is carbohydrate metabolism; D-threitol degradation. Catalyzes the NAD-dependent reversible oxidation of D-threitol. Involved in the degradation pathway of D-threitol, that allows M.smegmatis to grow on this compound as the sole carbon source. Does not catalyze the oxidation of xylitol, L-sorbitol, and L-sorbose. The polypeptide is D-threitol dehydrogenase (Mycolicibacterium smegmatis (strain ATCC 700084 / mc(2)155) (Mycobacterium smegmatis)).